Consider the following 1386-residue polypeptide: DNA-directed RNA polymerase subunit beta (1386 aa).

It belongs to the RNA polymerase beta chain family. In plastids the minimal PEP RNA polymerase catalytic core is composed of four subunits: alpha, beta, beta', and beta''. When a (nuclear-encoded) sigma factor is associated with the core the holoenzyme is formed, which can initiate transcription.

Its subcellular location is the plastid. It localises to the chloroplast. It carries out the reaction RNA(n) + a ribonucleoside 5'-triphosphate = RNA(n+1) + diphosphate. Its function is as follows. DNA-dependent RNA polymerase catalyzes the transcription of DNA into RNA using the four ribonucleoside triphosphates as substrates. This is DNA-directed RNA polymerase subunit beta from Thalassiosira pseudonana (Marine diatom).